Here is a 489-residue protein sequence, read N- to C-terminus: Cryptochrome DASH (489 aa).

The 135-residue stretch at 6–140 (PTVLVWFRND…EAKGYWGSTL (135 aa)) folds into the Photolyase/cryptochrome alpha/beta domain.

The protein belongs to the DNA photolyase class-1 family. It depends on FAD as a cofactor. (6R)-5,10-methylene-5,6,7,8-tetrahydrofolate is required as a cofactor.

May have a photoreceptor function. Binds DNA; represses transcription of at least 8 genes, including slr0364 and slr1866. Does not encode a DNA photolyase function. Its disruption does not affect circadian rhythm. The sequence is that of Cryptochrome DASH (cry) from Synechocystis sp. (strain ATCC 27184 / PCC 6803 / Kazusa).